The sequence spans 460 residues: Elongation factor 1-alpha-B (460 aa).

Gly2 carries the n,N,N-trimethylglycine modification. N6,N6-dimethyllysine; alternate is present on Lys3. Lys3 bears the N6-methyllysine; alternate mark. One can recognise a tr-type G domain in the interval 5 to 240; that stretch reads KGHINVVVIG…DSIEPPARPT (236 aa). The tract at residues 14–21 is G1; that stretch reads GHVDSGKS. 14–21 provides a ligand contact to GTP; the sequence is GHVDSGKS. Lys30 carries the N6-methyllysine modification. Residues 70–74 are G2; the sequence is GITID. Lys79 bears the N6,N6,N6-trimethyllysine mark. The tract at residues 91-94 is G3; that stretch reads DAPG. GTP is bound by residues 91–95 and 153–156; these read DAPGH and NKMD. The tract at residues 153 to 156 is G4; that stretch reads NKMD. The segment at 192 to 194 is G5; that stretch reads SGF. Position 316 is an N6,N6-dimethyllysine; alternate (Lys316). At Lys316 the chain carries N6-methyllysine; alternate. An N6-methyllysine modification is found at Lys390.

The protein belongs to the TRAFAC class translation factor GTPase superfamily. Classic translation factor GTPase family. EF-Tu/EF-1A subfamily.

It is found in the cytoplasm. Functionally, this protein promotes the GTP-dependent binding of aminoacyl-tRNA to the A-site of ribosomes during protein biosynthesis. The protein is Elongation factor 1-alpha-B (tef102) of Schizosaccharomyces pombe (strain 972 / ATCC 24843) (Fission yeast).